Consider the following 75-residue polypeptide: Transcription attenuation protein MtrB (75 aa).

The protein belongs to the MtrB family. Oligomer of 11 identical subunits arranged in doughnut-like structure.

In terms of biological role, required for transcription attenuation control in the Trp operon. This trans-acting factor seems to recognize a 10 bases nucleotide sequence in the Trp leader transcript causing transcription termination. Binds the leader RNA only in presence of L-tryptophan. The polypeptide is Transcription attenuation protein MtrB (Bacillus velezensis (strain DSM 23117 / BGSC 10A6 / LMG 26770 / FZB42) (Bacillus amyloliquefaciens subsp. plantarum)).